Reading from the N-terminus, the 96-residue chain is Co-chaperonin GroES (96 aa).

The protein belongs to the GroES chaperonin family. In terms of assembly, heptamer of 7 subunits arranged in a ring. Interacts with the chaperonin GroEL.

It localises to the cytoplasm. Its function is as follows. Together with the chaperonin GroEL, plays an essential role in assisting protein folding. The GroEL-GroES system forms a nano-cage that allows encapsulation of the non-native substrate proteins and provides a physical environment optimized to promote and accelerate protein folding. GroES binds to the apical surface of the GroEL ring, thereby capping the opening of the GroEL channel. In Idiomarina loihiensis (strain ATCC BAA-735 / DSM 15497 / L2-TR), this protein is Co-chaperonin GroES.